The chain runs to 500 residues: DNA double-strand break repair helicase HerA (500 aa).

ATP is bound by residues R142, 151–156 (GSGKSN), and 459–460 (KI).

This sequence belongs to the HerA family. Homohexamer. Forms a complex with NurA.

It catalyses the reaction Couples ATP hydrolysis with the unwinding of duplex DNA at the replication fork by translocating in the 5'-3' direction. This creates two antiparallel DNA single strands (ssDNA). The leading ssDNA polymer is the template for DNA polymerase III holoenzyme which synthesizes a continuous strand.. It carries out the reaction ATP + H2O = ADP + phosphate + H(+). The enzyme catalyses Couples ATP hydrolysis with the unwinding of duplex DNA by translocating in the 3'-5' direction.. With respect to regulation, ATPase activity is stimulated in the presence of linear double-stranded (ds)DNA. Helicase activity requires the presence of NurA. LhrC-Core (Hel112) inhibits the exonuclease activity of the HerA-NurA complex on ss- and dsDNA, has no effect on the nicking activity of NurA. Functionally, involved in DNA double-strand break (DSB) repair. Probably acts with NurA to stimulate resection of the 5' strand and produce the long 3' single-strand that is required for RadA loading. NurA and HerA together stimulate the end-resection of six nucleotides of a linear DNA substrate. Has DNA-dependent ATPase activity and bidirectional DNA helicase activity. Preferentially binds single stranded (ss)DNA, bubble and semiforked DNA substrate over other DNA molecules tested. Stimulates the exo- but not endonuclease activity of NurA. This chain is DNA double-strand break repair helicase HerA, found in Saccharolobus solfataricus (strain ATCC 35092 / DSM 1617 / JCM 11322 / P2) (Sulfolobus solfataricus).